Consider the following 197-residue polypeptide: Phosphoheptose isomerase (197 aa).

One can recognise an SIS domain in the interval 36–197; sequence MVNALLNEGK…IDSQLFGSEE (162 aa). 51–53 is a binding site for substrate; it reads NGG. The Zn(2+) site is built by histidine 60 and glutamate 64. Residues glutamate 64, 93-94, 119-121, serine 124, and glutamine 174 contribute to the substrate site; these read ND and STS. Zn(2+) contacts are provided by glutamine 174 and histidine 182.

It belongs to the SIS family. GmhA subfamily. In terms of assembly, homotetramer. Zn(2+) serves as cofactor.

The protein localises to the cytoplasm. It catalyses the reaction 2 D-sedoheptulose 7-phosphate = D-glycero-alpha-D-manno-heptose 7-phosphate + D-glycero-beta-D-manno-heptose 7-phosphate. It participates in carbohydrate biosynthesis; D-glycero-D-manno-heptose 7-phosphate biosynthesis; D-glycero-alpha-D-manno-heptose 7-phosphate and D-glycero-beta-D-manno-heptose 7-phosphate from sedoheptulose 7-phosphate: step 1/1. Its function is as follows. Catalyzes the isomerization of sedoheptulose 7-phosphate in D-glycero-D-manno-heptose 7-phosphate. The protein is Phosphoheptose isomerase of Pseudomonas putida (strain GB-1).